The chain runs to 84 residues: Beta-defensin 119 (84 aa).

The N-terminal stretch at 1-21 (MKFLFLFLAILLATKIPVISG) is a signal peptide. 3 disulfides stabilise this stretch: Cys28–Cys55, Cys35–Cys49, and Cys39–Cys56.

The protein belongs to the beta-defensin family.

It is found in the secreted. Its function is as follows. Has antibacterial activity. This chain is Beta-defensin 119 (DEFB119), found in Macaca fascicularis (Crab-eating macaque).